We begin with the raw amino-acid sequence, 425 residues long: Elongation factor 1-alpha (425 aa).

In terms of domain architecture, tr-type G spans 5-221 (KPHINLAVIG…DELEVPDKPT (217 aa)). The interval 14 to 21 (GHIDHGKS) is G1. 14 to 21 (GHIDHGKS) contacts GTP. Serine 21 lines the Mg(2+) pocket. Residues 70-74 (GITID) are G2. Positions 91-94 (DCPG) are G3. GTP-binding positions include 91 to 95 (DCPGH) and 146 to 149 (NKMD). Residues 146-149 (NKMD) form a G4 region. Residues 185-187 (SAF) form a G5 region.

Belongs to the TRAFAC class translation factor GTPase superfamily. Classic translation factor GTPase family. EF-Tu/EF-1A subfamily.

The protein localises to the cytoplasm. It catalyses the reaction GTP + H2O = GDP + phosphate + H(+). GTP hydrolase that promotes the GTP-dependent binding of aminoacyl-tRNA to the A-site of ribosomes during protein biosynthesis. The protein is Elongation factor 1-alpha of Methanospirillum hungatei JF-1 (strain ATCC 27890 / DSM 864 / NBRC 100397 / JF-1).